The chain runs to 502 residues: Solute carrier family 2, facilitated glucose transporter member 5 (502 aa).

N-acetylmethionine is present on methionine 1. At methionine 1–alanine 17 the chain is on the cytoplasmic side. The helical transmembrane segment at leucine 18 to valine 38 threads the bilayer. Tyrosine 31 lines the D-fructose pocket. Residues asparagine 39–threonine 67 lie on the Extracellular side of the membrane. Residue asparagine 50 is glycosylated (N-linked (GlcNAc...) asparagine). Residues leucine 68–phenylalanine 90 traverse the membrane as a helical segment. The Cytoplasmic portion of the chain corresponds to leucine 91 to arginine 97. Residues lysine 98–serine 118 traverse the membrane as a helical segment. The Extracellular portion of the chain corresponds to lysine 119 to glutamate 125. Residues isoleucine 126–tyrosine 148 traverse the membrane as a helical segment. Over leucine 149–alanine 160 the chain is Cytoplasmic. A helical membrane pass occupies residues leucine 161–leucine 181. Glutamine 166 serves as a coordination point for D-fructose. Topologically, residues arginine 182–tryptophan 191 are extracellular. Residues proline 192 to phenylalanine 212 traverse the membrane as a helical segment. Residues proline 213–glutamine 276 are Cytoplasmic-facing. The helical transmembrane segment at leucine 277–tyrosine 297 threads the bilayer. Residues glutamine 287 and isoleucine 295 to tyrosine 297 each bind D-fructose. At tyrosine 298–aspartate 312 the chain is on the extracellular side. Residues valine 313–phenylalanine 333 traverse the membrane as a helical segment. At valine 334–arginine 341 the chain is on the cytoplasmic side. The chain crosses the membrane as a helical span at residues asparagine 342–leucine 362. Residues alanine 363–tryptophan 370 are Extracellular-facing. Residues methionine 371–isoleucine 393 form a helical membrane-spanning segment. A D-fructose-binding site is contributed by histidine 386. The Cytoplasmic segment spans residues proline 394 to tyrosine 411. A helical membrane pass occupies residues methionine 412–isoleucine 432. Histidine 418 to tryptophan 419 contributes to the D-fructose binding site. Over glutamine 433–proline 438 the chain is Extracellular. The helical transmembrane segment at tyrosine 439–valine 459 threads the bilayer. The Cytoplasmic segment spans residues proline 460–glutamine 502.

The protein belongs to the major facilitator superfamily. Sugar transporter (TC 2.A.1.1) family. Glucose transporter subfamily. Detected in jejunum. Detected in kidney, skeletal muscle, brain and adipose tissue (at protein level). Detected in small intestine and in kidney, and at much lower levels in brain. Detected in enterocytes in duodenum, jejunum, and ileum.

It localises to the apical cell membrane. Its subcellular location is the cell membrane. The protein resides in the sarcolemma. The enzyme catalyses D-fructose(out) = D-fructose(in). With respect to regulation, fructose uptake is inhibited by mercury ions. Fructose uptake is only slightly inhibited by cytochalasin B. Functionally, functions as a fructose transporter that has only low activity with other monosaccharides. Can mediate the uptake of deoxyglucose, but with low efficiency. Essential for fructose uptake in the small intestine. Plays a role in the regulation of salt uptake and blood pressure in response to dietary fructose. Required for the development of high blood pressure in response to high dietary fructose intake. The chain is Solute carrier family 2, facilitated glucose transporter member 5 from Rattus norvegicus (Rat).